The primary structure comprises 494 residues: UDP-N-acetylmuramoyl-L-alanyl-D-glutamate--L-lysine ligase (494 aa).

UDP-N-acetyl-alpha-D-muramoyl-L-alanyl-D-glutamate is bound at residue Ser-30. An ATP-binding site is contributed by 110 to 116; the sequence is GTNGKTS. UDP-N-acetyl-alpha-D-muramoyl-L-alanyl-D-glutamate-binding positions include 152–153, Ser-179, and Arg-187; that span reads TT. Lys-219 is modified (N6-carboxylysine). The L-lysine recognition motif motif lies at 406 to 409; sequence DNPA.

Belongs to the MurCDEF family. MurE subfamily. Post-translationally, carboxylation is probably crucial for Mg(2+) binding and, consequently, for the gamma-phosphate positioning of ATP.

It localises to the cytoplasm. It catalyses the reaction UDP-N-acetyl-alpha-D-muramoyl-L-alanyl-D-glutamate + L-lysine + ATP = UDP-N-acetyl-alpha-D-muramoyl-L-alanyl-gamma-D-glutamyl-L-lysine + ADP + phosphate + H(+). Its pathway is cell wall biogenesis; peptidoglycan biosynthesis. Its function is as follows. Catalyzes the addition of L-lysine to the nucleotide precursor UDP-N-acetylmuramoyl-L-alanyl-D-glutamate (UMAG) in the biosynthesis of bacterial cell-wall peptidoglycan. This Staphylococcus aureus (strain bovine RF122 / ET3-1) protein is UDP-N-acetylmuramoyl-L-alanyl-D-glutamate--L-lysine ligase.